The primary structure comprises 765 residues: Probable serine/threonine-protein kinase DDB_G0271402 (765 aa).

The region spanning 35-328 is the Protein kinase domain; sequence LEFGQEIGKG…KEITERLKSL (294 aa). ATP is bound by residues 41–49 and Lys62; that span reads IGKGAYGKI. The active-site Proton acceptor is the Asp192. 7 disordered regions span residues 371–393, 443–477, 491–527, 545–620, 654–684, 699–738, and 746–765; these read IVHN…NNSN, SMGD…KIIN, SSDL…NNNS, PIQI…QQYQ, PLNI…HHHL, IISS…PTNI, and ASNS…TVQS. Residues 446–458 show a composition bias toward acidic residues; the sequence is DESDLDSDDEDDS. Composition is skewed to low complexity over residues 459-470, 499-527, 562-605, 662-678, and 699-720; these read YTSSASSSRCNS, NGNN…NNNS, PPTS…PKSN, NNNN…GNVN, and IISS…SLTS.

The protein belongs to the protein kinase superfamily. TKL Ser/Thr protein kinase family.

It carries out the reaction L-seryl-[protein] + ATP = O-phospho-L-seryl-[protein] + ADP + H(+). It catalyses the reaction L-threonyl-[protein] + ATP = O-phospho-L-threonyl-[protein] + ADP + H(+). This chain is Probable serine/threonine-protein kinase DDB_G0271402, found in Dictyostelium discoideum (Social amoeba).